We begin with the raw amino-acid sequence, 181 residues long: Acireductone dioxygenase (181 aa).

Positions 98, 100, 104, and 142 each coordinate Fe(2+). Positions 98, 100, 104, and 142 each coordinate Ni(2+).

Belongs to the acireductone dioxygenase (ARD) family. In terms of assembly, monomer. Requires Fe(2+) as cofactor. The cofactor is Ni(2+).

It catalyses the reaction 1,2-dihydroxy-5-(methylsulfanyl)pent-1-en-3-one + O2 = 3-(methylsulfanyl)propanoate + CO + formate + 2 H(+). The enzyme catalyses 1,2-dihydroxy-5-(methylsulfanyl)pent-1-en-3-one + O2 = 4-methylsulfanyl-2-oxobutanoate + formate + 2 H(+). It participates in amino-acid biosynthesis; L-methionine biosynthesis via salvage pathway; L-methionine from S-methyl-5-thio-alpha-D-ribose 1-phosphate: step 5/6. Functionally, catalyzes 2 different reactions between oxygen and the acireductone 1,2-dihydroxy-3-keto-5-methylthiopentene (DHK-MTPene) depending upon the metal bound in the active site. Fe-containing acireductone dioxygenase (Fe-ARD) produces formate and 2-keto-4-methylthiobutyrate (KMTB), the alpha-ketoacid precursor of methionine in the methionine recycle pathway. Ni-containing acireductone dioxygenase (Ni-ARD) produces methylthiopropionate, carbon monoxide and formate, and does not lie on the methionine recycle pathway. This chain is Acireductone dioxygenase, found in Alcanivorax borkumensis (strain ATCC 700651 / DSM 11573 / NCIMB 13689 / SK2).